Consider the following 162-residue polypeptide: Ribosome maturation factor RimP (162 aa).

The protein belongs to the RimP family.

It localises to the cytoplasm. Functionally, required for maturation of 30S ribosomal subunits. This chain is Ribosome maturation factor RimP, found in Ralstonia pickettii (strain 12J).